The chain runs to 392 residues: Queuine tRNA-ribosyltransferase (392 aa).

Catalysis depends on D93, which acts as the Proton acceptor. Residues 93-97 (DSGGY), D147, Q189, and G216 each bind substrate. Residues 247 to 253 (GVGAPED) are RNA binding. The active-site Nucleophile is the D266. Positions 271-275 (TRVAR) are RNA binding; important for wobble base 34 recognition. The Zn(2+) site is built by C304, C306, C309, and H335.

This sequence belongs to the queuine tRNA-ribosyltransferase family. As to quaternary structure, homodimer. Within each dimer, one monomer is responsible for RNA recognition and catalysis, while the other monomer binds to the replacement base PreQ1. Requires Zn(2+) as cofactor.

The catalysed reaction is 7-aminomethyl-7-carbaguanine + guanosine(34) in tRNA = 7-aminomethyl-7-carbaguanosine(34) in tRNA + guanine. It functions in the pathway tRNA modification; tRNA-queuosine biosynthesis. In terms of biological role, catalyzes the base-exchange of a guanine (G) residue with the queuine precursor 7-aminomethyl-7-deazaguanine (PreQ1) at position 34 (anticodon wobble position) in tRNAs with GU(N) anticodons (tRNA-Asp, -Asn, -His and -Tyr). Catalysis occurs through a double-displacement mechanism. The nucleophile active site attacks the C1' of nucleotide 34 to detach the guanine base from the RNA, forming a covalent enzyme-RNA intermediate. The proton acceptor active site deprotonates the incoming PreQ1, allowing a nucleophilic attack on the C1' of the ribose to form the product. After dissociation, two additional enzymatic reactions on the tRNA convert PreQ1 to queuine (Q), resulting in the hypermodified nucleoside queuosine (7-(((4,5-cis-dihydroxy-2-cyclopenten-1-yl)amino)methyl)-7-deazaguanosine). The polypeptide is Queuine tRNA-ribosyltransferase (Dehalococcoides mccartyi (strain ATCC BAA-2266 / KCTC 15142 / 195) (Dehalococcoides ethenogenes (strain 195))).